The chain runs to 194 residues: tRNA (mnm(5)s(2)U34)-methyltransferase (194 aa).

S-adenosyl-L-methionine-binding residues include His-33, Asp-34, Asp-52, Gln-54, Ser-79, and His-80.

Belongs to the methyltransferase superfamily. MnmM family. As to quaternary structure, homodimer.

It catalyses the reaction 5-aminomethyl-2-thiouridine(34) in tRNA + S-adenosyl-L-methionine = 5-methylaminomethyl-2-thiouridine(34) in tRNA + S-adenosyl-L-homocysteine + H(+). Its pathway is tRNA modification. Functionally, involved in the biosynthesis of 5-methylaminomethyl-2-thiouridine (mnm(5)s(2)U) at the wobble position (U34) in tRNA. Catalyzes the transfer of a methyl group from S-adenosyl-L-methionine to nm(5)s(2)U34 to form mnm(5)s(2)U34. The chain is tRNA (mnm(5)s(2)U34)-methyltransferase from Bacillus subtilis (strain 168).